The primary structure comprises 410 residues: Adenosine receptor A2a (410 aa).

The Extracellular segment spans residues 1 to 4 (MGSS). The helical transmembrane segment at 5–29 (VYITVELAIAVLAILGNVLVCWAVW) threads the bilayer. Topologically, residues 30–39 (INSNLQNVTN) are cytoplasmic. Residues 40 to 63 (FFVVSLAAADIAVGVLAIPFAITI) form a helical membrane-spanning segment. The Extracellular portion of the chain corresponds to 64–74 (STGFCAACHGC). 3 disulfide bridges follow: cysteine 68/cysteine 154, cysteine 71/cysteine 143, and cysteine 74/cysteine 161. The helical transmembrane segment at 75 to 97 (LFFACFVLVLTQSSIFSLLAIAI) threads the bilayer. At 98–117 (DRYIAIRIPLRYNGLVTGVR) the chain is on the cytoplasmic side. Residues 118–140 (AKGIIAICWVLSFAIGLTPMLGW) traverse the membrane as a helical segment. Residues 141–168 (NNCSQKDGNSTKTCGEGRVTCLFEDVVP) lie on the Extracellular side of the membrane. N-linked (GlcNAc...) asparagine glycans are attached at residues asparagine 142 and asparagine 149. Glutamate 164 contributes to the adenosine binding site. The chain crosses the membrane as a helical span at residues 169–193 (MNYMVYYNFFAFVLLPLLLMLAIYL). Over 194–229 (RIFLAARRQLKQMESQPLPGERTRSTLQKEVHAAKS) the chain is Cytoplasmic. The helical transmembrane segment at 230 to 253 (LAIIVGLFALCWLPLHIINCFTFF) threads the bilayer. Asparagine 248 lines the adenosine pocket. Cysteine 254 and cysteine 257 are oxidised to a cystine. Over 254–261 (CSTCRHAP) the chain is Extracellular. A helical membrane pass occupies residues 262 to 285 (PWLMYLAIILSHSNSVVNPFIYAY). Serine 272 and histidine 273 together coordinate adenosine. Topologically, residues 286–410 (RIREFRQTFR…SSWSSEFAPS (125 aa)) are cytoplasmic. The segment at 322-410 (HSTEGEQVSL…SSWSSEFAPS (89 aa)) is interaction with GAS2L2. The segment at 344–410 (GSATHSGRRP…SSWSSEFAPS (67 aa)) is disordered. The segment covering 371-388 (RDVELPTQERQEGQEHPG) has biased composition (basic and acidic residues). A compositionally biased stretch (polar residues) spans 401-410 (SSWSSEFAPS).

The protein belongs to the G-protein coupled receptor 1 family. As to quaternary structure, interacts (via cytoplasmic C-terminal domain) with USP4; the interaction is direct. May interact with DRD4. Interacts with NECAB2. Interacts (via cytoplasmic C-terminal domain) with GAS2L2; interaction enhances receptor-mediated adenylyl cyclase activity. Post-translationally, ubiquitinated. Deubiquitinated by USP4; leading to stabilization and expression at the cell surface. As to expression, expressed in striatal neurons (at protein level).

The protein localises to the cell membrane. Its function is as follows. Receptor for adenosine. The activity of this receptor is mediated by G proteins which activate adenylyl cyclase. This is Adenosine receptor A2a (Adora2a) from Rattus norvegicus (Rat).